The primary structure comprises 149 residues: Deoxyuridine 5'-triphosphate nucleotidohydrolase (149 aa).

Substrate is bound by residues 68-70 (RSG), N81, and 85-87 (LID).

Belongs to the dUTPase family. Mg(2+) serves as cofactor.

It catalyses the reaction dUTP + H2O = dUMP + diphosphate + H(+). The protein operates within pyrimidine metabolism; dUMP biosynthesis; dUMP from dCTP (dUTP route): step 2/2. In terms of biological role, this enzyme is involved in nucleotide metabolism: it produces dUMP, the immediate precursor of thymidine nucleotides and it decreases the intracellular concentration of dUTP so that uracil cannot be incorporated into DNA. This Aromatoleum aromaticum (strain DSM 19018 / LMG 30748 / EbN1) (Azoarcus sp. (strain EbN1)) protein is Deoxyuridine 5'-triphosphate nucleotidohydrolase.